The sequence spans 667 residues: Acyl-coenzyme A oxidase acox-3 (667 aa).

FAD contacts are provided by residues 138 to 141 (FCLT), 146 to 147 (GS), Gly178, Arg313, 334 to 337 (QQYR), and Gly410. Glu433 (proton acceptor) is an active-site residue. Glu435 provides a ligand contact to FAD. The Microbody targeting signal signature appears at 665–667 (SKL).

It belongs to the acyl-CoA oxidase family. In terms of assembly, homodimer. It depends on FAD as a cofactor. As to expression, expressed in intestine.

The protein resides in the peroxisome. The enzyme catalyses IC-asc-C7-CoA + O2 = IC-asc-DeltaC7-CoA + H2O2. The catalysed reaction is IC-asc-C9-CoA + O2 = IC-asc-DeltaC9-CoA + H2O2. It catalyses the reaction asc-C13-CoA + O2 = asc-DeltaC13-CoA + H2O2. Its pathway is lipid metabolism; peroxisomal fatty acid beta-oxidation. In contrast to other acyl-coenzyme A oxidases which bind to and are activated by ATP, does not bind ATP. Its function is as follows. Involved in the first step of peroxisomal beta-oxidation by catalyzing the desaturation of fatty acid-derived side chains of ascaroside pheromones, which regulates development and behavior. Specifically, shortens indol-3-carbonyl(IC)-ascarosides with 7-carbon (IC-asc-C7) or 9-carbon (IC-asc-C9) side chains and contributes to the shortening of ascarosides with 13-carbon (asc-C13) and 15-carbon (asc-C15) side chains. This chain is Acyl-coenzyme A oxidase acox-3, found in Caenorhabditis elegans.